A 303-amino-acid chain; its full sequence is Growth/differentiation factor 15 (303 aa).

Positions 1–30 are cleaved as a signal peptide; sequence MALRALHAQPTGGPQLRFLLFLLLLLLLLS. A propeptide spanning residues 31–188 is cleaved from the precursor; it reads WPSQGDALAL…LRSAAGRGRR (158 aa). Asparagine 71 carries an N-linked (GlcNAc...) asparagine glycan. 4 disulfides stabilise this stretch: cysteine 198–cysteine 205, cysteine 206–cysteine 269, cysteine 235–cysteine 300, and cysteine 239–cysteine 302.

It belongs to the TGF-beta family. In terms of assembly, homodimer; disulfide-linked. Interacts with GFRAL and RET; ligand of GFRAL, which mediates GDF15 internalization and cellular signaling through interaction with RET via the formation of a 2:2:2 ternary complex composed of GDF15, GFRAL and RET. In terms of tissue distribution, detected in plasma (at protein level).

It is found in the secreted. Hormone produced in response to various stresses to confer information about those stresses to the brain, and trigger an aversive response, characterized by nausea and/or loss of appetite. The aversive response is both required to reduce continuing exposure to those stresses at the time of exposure and to promote avoidance behavior in the future. Acts by binding to its receptor, GFRAL, activating GFRAL-expressing neurons localized in the area postrema and nucleus tractus solitarius of the brainstem. It then triggers the activation of neurons localized within the parabrachial nucleus and central amygdala, which constitutes part of the 'emergency circuit' that shapes responses to stressful conditions. The GDF15-GFRAL signal induces expression of genes involved in metabolism, such as lipid metabolism in adipose tissues. Contributes to the effect of metformin, an anti-diabetic drug, on appetite reduction and weight loss: produced in the kidney in response to metformin treatment, thereby activating the GDF15-GFRAL response, leading to reduced appetite and weight. Required for avoidance behavior in response to food allergens: induced downstream of mast cell activation to promote aversion and minimize harmful effects of exposure to noxious substances. Produced in response to anticancer drugs, such as camptothecin or cisplatin, promoting nausea and contributing to malnutrition. Overproduced in many cancers, promoting anorexia in cancer (cachexia). Responsible for the risk of nausea during pregnancy: high levels of GDF15 during pregnancy, mostly originating from embryos, are associated with increased nausea. Maternal sensitivity to nausea is probably determined by pre-pregnancy exposure to GDF15, females with naturally high level of GDF15 being less susceptible to nausea than female rats with low levels of GDF15 before pregnancy. Promotes metabolic adaptation in response to systemic inflammation caused by bacterial and viral infections in order to promote tissue tolerance and prevent tissue damage. Required for tissue tolerance in response to myocardial infarction by acting as an inhibitor of leukocyte integring activation, thereby protecting against cardiac rupture. Inhibits growth hormone signaling on hepatocytes. This is Growth/differentiation factor 15 from Rattus norvegicus (Rat).